We begin with the raw amino-acid sequence, 480 residues long: Vacuolar amino acid transporter 2 (480 aa).

The tract at residues 21–48 (LTNFPFPGTTDNDSDDGSQGQNSLNIIT) is disordered. Residues 37 to 46 (GSQGQNSLNI) are compositionally biased toward polar residues. 9 helical membrane passes run 72-92 (AFMN…PFAI), 95-115 (AGIL…DWTL), 145-165 (LILF…CIII), 214-234 (LSKA…TVVI), 263-283 (LSVI…FFSM), 297-317 (ISII…FAVF), 338-358 (IARL…IFVL), 394-414 (VFIT…FELI), and 447-467 (FYLC…QTII).

The protein belongs to the amino acid/polyamine transporter 2 family.

It localises to the vacuole membrane. Probable amino acid transporter of unknown specificity. This chain is Vacuolar amino acid transporter 2 (AVT2), found in Saccharomyces cerevisiae (strain ATCC 204508 / S288c) (Baker's yeast).